We begin with the raw amino-acid sequence, 309 residues long: Glutaminase (309 aa).

Residues Ser64, Asn114, Glu160, Asn167, Tyr191, Tyr243, and Val261 each coordinate substrate.

It belongs to the glutaminase family. In terms of assembly, homotetramer.

The enzyme catalyses L-glutamine + H2O = L-glutamate + NH4(+). This Rhizobium johnstonii (strain DSM 114642 / LMG 32736 / 3841) (Rhizobium leguminosarum bv. viciae) protein is Glutaminase.